A 239-amino-acid chain; its full sequence is tRNA (guanine-N(1)-)-methyltransferase (239 aa).

S-adenosyl-L-methionine contacts are provided by residues glycine 110 and 130 to 135 (VGDYVL).

The protein belongs to the RNA methyltransferase TrmD family. In terms of assembly, homodimer.

It localises to the cytoplasm. The catalysed reaction is guanosine(37) in tRNA + S-adenosyl-L-methionine = N(1)-methylguanosine(37) in tRNA + S-adenosyl-L-homocysteine + H(+). In terms of biological role, specifically methylates guanosine-37 in various tRNAs. This Borrelia turicatae (strain 91E135) protein is tRNA (guanine-N(1)-)-methyltransferase.